The primary structure comprises 259 residues: Tryptophan synthase alpha chain (259 aa).

Active-site proton acceptor residues include Glu52 and Asp63.

The protein belongs to the TrpA family. As to quaternary structure, tetramer of two alpha and two beta chains.

The catalysed reaction is (1S,2R)-1-C-(indol-3-yl)glycerol 3-phosphate + L-serine = D-glyceraldehyde 3-phosphate + L-tryptophan + H2O. The protein operates within amino-acid biosynthesis; L-tryptophan biosynthesis; L-tryptophan from chorismate: step 5/5. Its function is as follows. The alpha subunit is responsible for the aldol cleavage of indoleglycerol phosphate to indole and glyceraldehyde 3-phosphate. The polypeptide is Tryptophan synthase alpha chain (Streptococcus gordonii (strain Challis / ATCC 35105 / BCRC 15272 / CH1 / DL1 / V288)).